The primary structure comprises 483 residues: Cobyric acid synthase (483 aa).

A GATase cobBQ-type domain is found at 251–438; it reads ALIVAVPMLP…LHGVFSADRF (188 aa). The active-site Nucleophile is cysteine 333. Residue histidine 430 is part of the active site.

Belongs to the CobB/CobQ family. CobQ subfamily.

Its pathway is cofactor biosynthesis; adenosylcobalamin biosynthesis. In terms of biological role, catalyzes amidations at positions B, D, E, and G on adenosylcobyrinic A,C-diamide. NH(2) groups are provided by glutamine, and one molecule of ATP is hydrogenolyzed for each amidation. The chain is Cobyric acid synthase from Brucella melitensis biotype 2 (strain ATCC 23457).